A 374-amino-acid chain; its full sequence is Multicilin (374 aa).

2 disordered regions span residues 18 to 72 (CPNR…ALPA) and 84 to 105 (CSSF…QSHS). Residues 168-216 (EQYWKEVADQNQRALGDALIENNQLHATLTQKQEEIASLKERNLQLKEL) are a coiled coil. A disordered region spans residues 284–306 (LQSRDPKRLRLQPEPQSLDRRPG).

It belongs to the geminin family. As to quaternary structure, heterodimer (via coiled-coil domain) with GMNN (via coiled-coil domain); targets GMNN to the nucleus. Can form homodimers (in vitro, via coiled-coil domain), but these are much less stable than the heterodimer formed with GMNN.

The protein resides in the nucleus. In terms of biological role, transcription regulator specifically required for multiciliate cell differentiation. Acts in a multiprotein complex containing E2F4 and E2F5 that binds and activates genes required for centriole biogenesis. Required for the deuterosome-mediated acentriolar pathway. Plays a role in mitotic cell cycle progression by promoting cell cycle exit. Modulates GMNN activity by reducing its affinity for CDT1. The chain is Multicilin (MCIDAS) from Bos taurus (Bovine).